The chain runs to 323 residues: CYFIP-related Rac1 interactor A (323 aa).

The protein belongs to the CYRI family. As to quaternary structure, interacts with RAC1 (GTP-bound form preferentially).

The protein localises to the membrane. In terms of biological role, may negatively regulate RAC1 signaling and RAC1-driven cytoskeletal remodeling. May regulate chemotaxis, cell migration and epithelial polarization by controlling the polarity, plasticity, duration and extent of protrusions. The chain is CYFIP-related Rac1 interactor A (CYRIA) from Bos taurus (Bovine).